Reading from the N-terminus, the 379-residue chain is Cobalt-precorrin-5B C(1)-methyltransferase (379 aa).

The protein belongs to the CbiD family.

It catalyses the reaction Co-precorrin-5B + S-adenosyl-L-methionine = Co-precorrin-6A + S-adenosyl-L-homocysteine. The protein operates within cofactor biosynthesis; adenosylcobalamin biosynthesis; cob(II)yrinate a,c-diamide from sirohydrochlorin (anaerobic route): step 6/10. In terms of biological role, catalyzes the methylation of C-1 in cobalt-precorrin-5B to form cobalt-precorrin-6A. In Klebsiella pneumoniae subsp. pneumoniae (strain ATCC 700721 / MGH 78578), this protein is Cobalt-precorrin-5B C(1)-methyltransferase.